A 161-amino-acid polypeptide reads, in one-letter code: Putative 4-hydroxy-4-methyl-2-oxoglutarate aldolase (161 aa).

Substrate contacts are provided by residues 75 to 78 and R97; that span reads GDML. D98 lines the a divalent metal cation pocket.

Belongs to the class II aldolase/RraA-like family. As to quaternary structure, homotrimer. It depends on a divalent metal cation as a cofactor.

It carries out the reaction 4-hydroxy-4-methyl-2-oxoglutarate = 2 pyruvate. The enzyme catalyses oxaloacetate + H(+) = pyruvate + CO2. In terms of biological role, catalyzes the aldol cleavage of 4-hydroxy-4-methyl-2-oxoglutarate (HMG) into 2 molecules of pyruvate. Also contains a secondary oxaloacetate (OAA) decarboxylase activity due to the common pyruvate enolate transition state formed following C-C bond cleavage in the retro-aldol and decarboxylation reactions. The protein is Putative 4-hydroxy-4-methyl-2-oxoglutarate aldolase of Marinomonas sp. (strain MWYL1).